The primary structure comprises 1342 residues: Restriction of telomere capping protein 1 (1342 aa).

Positions 1-39 (MSLSPHVENASIPKGSTPIPKNRNVSSIGKGEFLGSSSS) are disordered. WD repeat units follow at residues 207 to 248 (NKFS…SIDN), 256 to 296 (EHTR…SKSS), 305 to 342 (TASD…YKFA), 367 to 406 (AHTG…NAAE), 439 to 486 (NTDY…IPKH), and 489 to 527 (LSET…TVLE). Disordered stretches follow at residues 559–593 (PELQ…IGGI), 600–619 (TGLT…GPTF), 630–651 (ASSF…ENRE), 736–766 (KNAT…DDDD), and 788–831 (LMNE…DRSR). The segment covering 630-644 (ASSFNSSSASLTSLT) has biased composition (low complexity). A compositionally biased stretch (acidic residues) spans 753 to 766 (DDGDDDDDDDDDDD). A compositionally biased stretch (low complexity) spans 815–824 (SSISSISASR). Residues 844–884 (KIQTLVDLISIATHNASVYLSIDDLTNFKIWILIRDSLLWD) form a WD 7 repeat. Disordered regions lie at residues 942 to 963 (AFRA…KLKE) and 1014 to 1047 (DEHE…PILQ). 2 stretches are compositionally biased toward basic and acidic residues: residues 952 to 963 (DAEKKPVSKLKE) and 1016 to 1028 (HEHQ…HDSP). Residues serine 1037, serine 1081, serine 1088, serine 1090, serine 1124, and serine 1134 each carry the phosphoserine modification. WD repeat units follow at residues 1130-1170 (SRPD…KQLY) and 1217-1256 (LFGI…LITN). Residues 1294–1336 (CVLCERPLKKLTMVILPCGHEGHFQCIQEWFLDENEQECPGGC) form an RING-type; degenerate zinc finger.

This sequence belongs to the WD repeat RTC1 family.

It localises to the vacuole. May be involved in a process influencing telomere capping. The sequence is that of Restriction of telomere capping protein 1 (RTC1) from Saccharomyces cerevisiae (strain RM11-1a) (Baker's yeast).